The chain runs to 90 residues: Evasin P1126 (90 aa).

The N-terminal stretch at 1–25 (MTSHSAVRIAIFAVIALHSIFECLS) is a signal peptide. 3 disulfide bridges follow: C46–C62, C50–C64, and C58–C75. An N-linked (GlcNAc...) asparagine glycan is attached at N55. N77 carries N-linked (GlcNAc...) asparagine glycosylation.

It is found in the secreted. Salivary chemokine-binding protein which binds to host chemokines CXCL1, CXCL2, CXCL3, CXCL4, CXCL5, CXCL6, CXCL7, CXCL10 and CXCL11. The chain is Evasin P1126 from Amblyomma cajennense (Cayenne tick).